The primary structure comprises 463 residues: ATP-dependent protease ATPase subunit HslU (463 aa).

ATP-binding positions include I19, 61–66, D277, E341, and R413; that span reads GVGKTE.

This sequence belongs to the ClpX chaperone family. HslU subfamily. In terms of assembly, a double ring-shaped homohexamer of HslV is capped on each side by a ring-shaped HslU homohexamer. The assembly of the HslU/HslV complex is dependent on binding of ATP.

It is found in the cytoplasm. In terms of biological role, ATPase subunit of a proteasome-like degradation complex; this subunit has chaperone activity. The binding of ATP and its subsequent hydrolysis by HslU are essential for unfolding of protein substrates subsequently hydrolyzed by HslV. HslU recognizes the N-terminal part of its protein substrates and unfolds these before they are guided to HslV for hydrolysis. The chain is ATP-dependent protease ATPase subunit HslU from Bacillus cytotoxicus (strain DSM 22905 / CIP 110041 / 391-98 / NVH 391-98).